We begin with the raw amino-acid sequence, 293 residues long: Large ribosomal RNA subunit accumulation protein YCED homolog 1, chloroplastic (293 aa).

The transit peptide at 1–42 (MYYPQPTVSLAAAVALLRPSLRRHSQRASSLLRSSTPPPWVS) directs the protein to the chloroplast.

Belongs to the DUF177 domain family. In terms of tissue distribution, highly expressed in shoots and leaves. Detected in roots, embryos and endosperm.

Its subcellular location is the plastid. The protein localises to the chloroplast. Functionally, plays a role in synthesis, processing and/or stability of 23S rRNA. Required for embryogenesis. May be involved in RPL23 transcript levels regulation in non-photosynthetic plastids. The protein is Large ribosomal RNA subunit accumulation protein YCED homolog 1, chloroplastic of Zea mays (Maize).